The primary structure comprises 431 residues: Saglin (431 aa).

Residues 1 to 39 (MSVRDYSGVQVISSRKHRSMSRLPTVLLLLASAAVLAAG) form the signal peptide. The N-linked (GlcNAc...) asparagine glycan is linked to N95. Positions 120–169 (LDDAQRQMEQEHRQYAATLEEQLHAAQQETQQEQEMKKALQKQLDALTDS) form a coiled coil.

As to quaternary structure, homodimer. As to expression, female salivary gland (at protein level). Not detected in female carcass without salivary glands, midgut and hemolymph (at protein level). Probably not expressed in male tissues.

Its subcellular location is the secreted. In terms of biological role, (Microbial infection) Facilitates efficient midgut colonization by Plasmodium berghei parasites. Promotes successful transmission of Plasmodium berghei at low infection densities. Functionally, (Microbial infection) Facilitates efficient midgut colonization by Plasmodium falciparum. This Anopheles coluzzii (African malaria mosquito) protein is Saglin.